The sequence spans 529 residues: Bifunctional purine biosynthesis protein PurH (529 aa).

In terms of domain architecture, MGS-like spans 1–148 (MQQRRPVRRA…KNHKDVAIVV (148 aa)).

Belongs to the PurH family.

It carries out the reaction (6R)-10-formyltetrahydrofolate + 5-amino-1-(5-phospho-beta-D-ribosyl)imidazole-4-carboxamide = 5-formamido-1-(5-phospho-D-ribosyl)imidazole-4-carboxamide + (6S)-5,6,7,8-tetrahydrofolate. The enzyme catalyses IMP + H2O = 5-formamido-1-(5-phospho-D-ribosyl)imidazole-4-carboxamide. It participates in purine metabolism; IMP biosynthesis via de novo pathway; 5-formamido-1-(5-phospho-D-ribosyl)imidazole-4-carboxamide from 5-amino-1-(5-phospho-D-ribosyl)imidazole-4-carboxamide (10-formyl THF route): step 1/1. The protein operates within purine metabolism; IMP biosynthesis via de novo pathway; IMP from 5-formamido-1-(5-phospho-D-ribosyl)imidazole-4-carboxamide: step 1/1. In Salmonella schwarzengrund (strain CVM19633), this protein is Bifunctional purine biosynthesis protein PurH.